A 461-amino-acid chain; its full sequence is tRNA modification GTPase MnmE (461 aa).

(6S)-5-formyl-5,6,7,8-tetrahydrofolate is bound by residues Arg23, Glu88, and Arg127. The region spanning 223–383 (GLNTVIVGKP…LKECIKNLFF (161 aa)) is the TrmE-type G domain. A K(+)-binding site is contributed by Asn233. GTP contacts are provided by residues 233-238 (NVGKSS), 252-258 (TEIPGTT), and 277-280 (DTAG). Residue Ser237 participates in Mg(2+) binding. 3 residues coordinate K(+): Thr252, Ile254, and Thr257. A Mg(2+)-binding site is contributed by Thr258. Lys461 provides a ligand contact to (6S)-5-formyl-5,6,7,8-tetrahydrofolate.

It belongs to the TRAFAC class TrmE-Era-EngA-EngB-Septin-like GTPase superfamily. TrmE GTPase family. As to quaternary structure, homodimer. Heterotetramer of two MnmE and two MnmG subunits. K(+) is required as a cofactor.

It is found in the cytoplasm. Its function is as follows. Exhibits a very high intrinsic GTPase hydrolysis rate. Involved in the addition of a carboxymethylaminomethyl (cmnm) group at the wobble position (U34) of certain tRNAs, forming tRNA-cmnm(5)s(2)U34. This Clostridium botulinum (strain Okra / Type B1) protein is tRNA modification GTPase MnmE.